The following is a 104-amino-acid chain: Flagellar hook-basal body complex protein FliE (104 aa).

Belongs to the FliE family.

Its subcellular location is the bacterial flagellum basal body. This is Flagellar hook-basal body complex protein FliE from Salmonella typhi.